Consider the following 158-residue polypeptide: Endoribonuclease YbeY (158 aa).

His124, His128, and His134 together coordinate Zn(2+).

This sequence belongs to the endoribonuclease YbeY family. Zn(2+) serves as cofactor.

It is found in the cytoplasm. Its function is as follows. Single strand-specific metallo-endoribonuclease involved in late-stage 70S ribosome quality control and in maturation of the 3' terminus of the 16S rRNA. This chain is Endoribonuclease YbeY, found in Caldicellulosiruptor saccharolyticus (strain ATCC 43494 / DSM 8903 / Tp8T 6331).